The following is a 286-amino-acid chain: Interferon-induced 35 kDa protein homolog (286 aa).

The tract at residues 5 to 26 (LQTVLYSLQEEQARLKMRLQEL) is leucine-zipper. NID domains are found at residues 81–170 (ALVT…GDVE) and 183–266 (FADE…GEVE).

It belongs to the NMI family. As to quaternary structure, homodimer. Also interacts with B-ATF. Interacts with TRIM21. Interacts (via NID domains) with NMI (via NID domains); the interaction is direct and is facilitated by TRIM21. Phosphorylated. Dephosphorylation correlates with the formation of a complex with NMI.

It is found in the cytoplasm. The protein resides in the nucleus. It localises to the secreted. Its function is as follows. Acts as a signaling pathway regulator involved in innate immune system response. In response to interferon IFN-alpha, associates in a complex with transcriptional regulator NMI to regulate immune response; the complex formation prevents proteasome-mediated degradation of IFI35 and correlates with IFI35 dephosphorylation. In complex with NMI, inhibits virus-triggered type I interferon/IFN-beta production. In complex with NMI, negatively regulates nuclear factor NF-kappa-B signaling by inhibiting the nuclear translocation, activation and transcription of the NF-kappa-B subunit p65/RELA, resulting in the inhibition of endothelial cell proliferation, migration and re-endothelialization of injured arteries. Beside its role as an intracellular signaling pathway regulator, also functions extracellularly as damage-associated molecular patterns (DAMPs) to promote inflammation when actively released by macrophage to the extracellular space during cell injury and pathogen invasion. Macrophage-secreted IFI35 activates NF-kappa-B signaling in adjacent macrophages through Toll-like receptor 4/TLR4 activation, thereby inducing NF-kappa-B translocation from the cytoplasm into the nucleus which promotes the release of pro-inflammatory cytokines. This is Interferon-induced 35 kDa protein homolog from Mus musculus (Mouse).